A 466-amino-acid chain; its full sequence is ATP synthase subunit beta (466 aa).

Residue 148–155 (GGAGVGKT) participates in ATP binding.

It belongs to the ATPase alpha/beta chains family. As to quaternary structure, F-type ATPases have 2 components, CF(1) - the catalytic core - and CF(0) - the membrane proton channel. CF(1) has five subunits: alpha(3), beta(3), gamma(1), delta(1), epsilon(1). CF(0) has three main subunits: a(1), b(2) and c(9-12). The alpha and beta chains form an alternating ring which encloses part of the gamma chain. CF(1) is attached to CF(0) by a central stalk formed by the gamma and epsilon chains, while a peripheral stalk is formed by the delta and b chains.

The protein localises to the cell inner membrane. It carries out the reaction ATP + H2O + 4 H(+)(in) = ADP + phosphate + 5 H(+)(out). Functionally, produces ATP from ADP in the presence of a proton gradient across the membrane. The catalytic sites are hosted primarily by the beta subunits. This is ATP synthase subunit beta from Xylella fastidiosa (strain M12).